The chain runs to 582 residues: Putative phospholipase B-like 2 (582 aa).

Residues 1 to 42 (MTRLIRSKKQFLIRSLHSVFYYLGSLLHSTFEMNVFIGLLLA) form the signal peptide. N-linked (GlcNAc...) asparagine glycans are attached at residues Asn91, Asn141, Asn178, Asn224, and Asn318. Cys139 and Cys146 are joined by a disulfide. A disulfide bridge connects residues Cys480 and Cys482. A glycan (N-linked (GlcNAc...) asparagine) is linked at Asn502.

Belongs to the phospholipase B-like family.

It is found in the secreted. Putative phospholipase. The protein is Putative phospholipase B-like 2 of Caenorhabditis elegans.